Consider the following 166-residue polypeptide: Protein-export protein SecB (166 aa).

This sequence belongs to the SecB family. As to quaternary structure, homotetramer, a dimer of dimers. One homotetramer interacts with 1 SecA dimer.

It localises to the cytoplasm. In terms of biological role, one of the proteins required for the normal export of preproteins out of the cell cytoplasm. It is a molecular chaperone that binds to a subset of precursor proteins, maintaining them in a translocation-competent state. It also specifically binds to its receptor SecA. The chain is Protein-export protein SecB from Rhizorhabdus wittichii (strain DSM 6014 / CCUG 31198 / JCM 15750 / NBRC 105917 / EY 4224 / RW1) (Sphingomonas wittichii).